The sequence spans 148 residues: Cysteine proteinase inhibitor 5 (148 aa).

An N-terminal signal peptide occupies residues 1 to 25 (MASKLYYAVAPLVLVLLLLAPLSSA). The short motif at 99–103 (QVVSG) is the Secondary area of contact element.

Belongs to the cystatin family. Phytocystatin subfamily.

It localises to the secreted. Functionally, specific inhibitor of cysteine proteinases. Probably involved in the regulation of endogenous processes and in defense against pests and pathogens. This chain is Cysteine proteinase inhibitor 5, found in Oryza sativa subsp. japonica (Rice).